Consider the following 757-residue polypeptide: MTILNHTLGFPRVGLQRELKKAQESYWAGNSTQEELLTVGRELRARHWQQQKDAGVNLLPVGDFAWYDHVLTTSLMLGNVPARHQNKDGSVDLDTLFRLGRGRAPSGEPAAAAEMTKWFNTNYHYMVPEFVQGQQFKLTWTQLLDEVDEALALGHKVKPVLLGPVTYLWLGKVKGDPFDRLNLLQDILPVYRQVLAELAKRDIEWVQIDEPALALELPAEWLAAFKPAYDALQGQTKLLLTTYFDSIGQNLDTISALPVQGLHVDLVHGKDAITLLNSKVPADWLLSVGVINGRNVWRADLSSWFERLQPLVARRKRLWIGSSCSLLHSPIDLSVETRLDEEVKSWFAFALQKCSELALLSSALNNNDPASLEAWSAPIRSRKHSTRVHNAAVGQRLAAISPQDSLRKNRYPVRAKAQRQRFQLPAWPTTTIGSFPQTTEIRGLRLDFKQGRLDGTHYRTGIAEHIKQAIVEQERLGLDVLVHGEAERNDMVEYFGEHLDGFIFTQNGWVQSYGSRCVKPPVIIGDVSRPEAITVNWAKYAQSLTDKPVKGMLTGPVTILCWSFPREDVSRETIAKQIALALRDEVEDLEKAGIGIIQIDEPALREGLPLHQSDWGAYLEWAVDAFRLNAAVAQDDTQIHTHMCYCEFNDIMDSIAALDADVITIETSRSDMELLESFEEFEYPNEIGPGVYDIHSPNVPSVEWVEALLLKAAQRIPTERLWVNPDCGLKTRGWTETRQALANMVKAAQNLRQAQKA.

Residues 17–20 (RELK) and K117 contribute to the 5-methyltetrahydropteroyltri-L-glutamate site. L-homocysteine-binding positions include 432-434 (IGS) and E485. L-methionine is bound by residues 432-434 (IGS) and E485. Residues 516 to 517 (RC) and W562 each bind 5-methyltetrahydropteroyltri-L-glutamate. D600 provides a ligand contact to L-homocysteine. D600 is an L-methionine binding site. E606 is a 5-methyltetrahydropteroyltri-L-glutamate binding site. Zn(2+)-binding residues include H642, C644, and E666. Residue H695 is the Proton donor of the active site. C727 contacts Zn(2+).

The protein belongs to the vitamin-B12 independent methionine synthase family. Requires Zn(2+) as cofactor.

The catalysed reaction is 5-methyltetrahydropteroyltri-L-glutamate + L-homocysteine = tetrahydropteroyltri-L-glutamate + L-methionine. The protein operates within amino-acid biosynthesis; L-methionine biosynthesis via de novo pathway; L-methionine from L-homocysteine (MetE route): step 1/1. Catalyzes the transfer of a methyl group from 5-methyltetrahydrofolate to homocysteine resulting in methionine formation. The polypeptide is 5-methyltetrahydropteroyltriglutamate--homocysteine methyltransferase (Erwinia tasmaniensis (strain DSM 17950 / CFBP 7177 / CIP 109463 / NCPPB 4357 / Et1/99)).